The chain runs to 71 residues: Sec-independent protein translocase protein TatA (71 aa).

Residues 1–21 form a helical membrane-spanning segment; it reads MGSFSLLHWLVVLVIVLLVFG. The interval 43–71 is disordered; it reads LHEDDKPTDQLGSTSQSTASGPQQDHGKH. Positions 52-65 are enriched in polar residues; sequence QLGSTSQSTASGPQ.

Belongs to the TatA/E family. The Tat system comprises two distinct complexes: a TatABC complex, containing multiple copies of TatA, TatB and TatC subunits, and a separate TatA complex, containing only TatA subunits. Substrates initially bind to the TatABC complex, which probably triggers association of the separate TatA complex to form the active translocon.

It is found in the cell inner membrane. Its function is as follows. Part of the twin-arginine translocation (Tat) system that transports large folded proteins containing a characteristic twin-arginine motif in their signal peptide across membranes. TatA could form the protein-conducting channel of the Tat system. The chain is Sec-independent protein translocase protein TatA from Xylella fastidiosa (strain M12).